A 274-amino-acid polypeptide reads, in one-letter code: Syntaxin-12 (274 aa).

Residues M1–R20 are disordered. Residue S2 is modified to N-acetylserine. Over S2–K250 the chain is Cytoplasmic. Residues Q34–L80 adopt a coiled-coil conformation. The segment at E128–E150 is disordered. Phosphoserine occurs at positions 139, 142, 218, and 225. One can recognise a t-SNARE coiled-coil homology domain in the interval L178–A240. The chain crosses the membrane as a helical; Anchor for type IV membrane protein span at residues M251–V271. Residues A272 to K274 are Vesicular-facing.

This sequence belongs to the syntaxin family. Associates with the BLOC-1 complex. Interacts with BLOC1S6. Interacts with NAPA and SNAP23. Identified in a complex containing STX6, STX12, VAMP4 and VTI1A. Interacts with GRIPAP1. Forms a complex with GRIP1, GRIA2 and NSG1; controls the intracellular fate of AMPAR and the endosomal sorting of the GRIA2 subunit toward recycling and membrane targeting. Interacts with NSG1. Interacts with TPC1. Interacts (via N-terminus) with VPS13B. As to expression, ubiquitous. Highly expressed in brain.

The protein localises to the endosome membrane. The protein resides in the golgi apparatus membrane. It localises to the endomembrane system. Its subcellular location is the early endosome membrane. It is found in the recycling endosome membrane. In terms of biological role, SNARE promoting fusion of transport vesicles with target membranes. Together with SNARE STX6, promotes movement of vesicles from endosomes to the cell membrane, and may therefore function in the endocytic recycling pathway. Through complex formation with GRIP1, GRIA2 and NSG1 controls the intracellular fate of AMPAR and the endosomal sorting of the GRIA2 subunit toward recycling and membrane targeting. The sequence is that of Syntaxin-12 (Stx12) from Rattus norvegicus (Rat).